The primary structure comprises 299 residues: UDP-N-acetylenolpyruvoylglucosamine reductase (299 aa).

In terms of domain architecture, FAD-binding PCMH-type spans 26–191; the sequence is GIGGPAKYFV…VSATFQLNAS (166 aa). The active site involves arginine 170. Cysteine 218 serves as the catalytic Proton donor. Glutamate 288 is an active-site residue.

This sequence belongs to the MurB family. It depends on FAD as a cofactor.

The protein localises to the cytoplasm. The catalysed reaction is UDP-N-acetyl-alpha-D-muramate + NADP(+) = UDP-N-acetyl-3-O-(1-carboxyvinyl)-alpha-D-glucosamine + NADPH + H(+). The protein operates within cell wall biogenesis; peptidoglycan biosynthesis. In terms of biological role, cell wall formation. This chain is UDP-N-acetylenolpyruvoylglucosamine reductase, found in Protochlamydia amoebophila (strain UWE25).